Consider the following 376-residue polypeptide: Succinyl-diaminopimelate desuccinylase (376 aa).

A Zn(2+)-binding site is contributed by histidine 66. Residue aspartate 68 is part of the active site. Aspartate 99 contacts Zn(2+). The Proton acceptor role is filled by glutamate 133. Zn(2+) contacts are provided by glutamate 134, glutamate 162, and histidine 349.

This sequence belongs to the peptidase M20A family. DapE subfamily. Homodimer. Requires Zn(2+) as cofactor. It depends on Co(2+) as a cofactor.

It carries out the reaction N-succinyl-(2S,6S)-2,6-diaminopimelate + H2O = (2S,6S)-2,6-diaminopimelate + succinate. It participates in amino-acid biosynthesis; L-lysine biosynthesis via DAP pathway; LL-2,6-diaminopimelate from (S)-tetrahydrodipicolinate (succinylase route): step 3/3. Catalyzes the hydrolysis of N-succinyl-L,L-diaminopimelic acid (SDAP), forming succinate and LL-2,6-diaminopimelate (DAP), an intermediate involved in the bacterial biosynthesis of lysine and meso-diaminopimelic acid, an essential component of bacterial cell walls. This chain is Succinyl-diaminopimelate desuccinylase, found in Vesicomyosocius okutanii subsp. Calyptogena okutanii (strain HA).